The following is a 473-amino-acid chain: 3-isopropylmalate dehydratase large subunit (473 aa).

3 residues coordinate [4Fe-4S] cluster: cysteine 355, cysteine 415, and cysteine 418. Positions 423 to 452 (PDQLAPGERSASTSNRNFEGRQGKGGRTHL) are disordered.

It belongs to the aconitase/IPM isomerase family. LeuC type 1 subfamily. As to quaternary structure, heterodimer of LeuC and LeuD. Requires [4Fe-4S] cluster as cofactor.

The catalysed reaction is (2R,3S)-3-isopropylmalate = (2S)-2-isopropylmalate. The protein operates within amino-acid biosynthesis; L-leucine biosynthesis; L-leucine from 3-methyl-2-oxobutanoate: step 2/4. Functionally, catalyzes the isomerization between 2-isopropylmalate and 3-isopropylmalate, via the formation of 2-isopropylmaleate. This chain is 3-isopropylmalate dehydratase large subunit, found in Corynebacterium jeikeium (strain K411).